The chain runs to 849 residues: Glycogen phosphorylase (849 aa).

At Lys-679 the chain carries N6-(pyridoxal phosphate)lysine.

It belongs to the glycogen phosphorylase family. Pyridoxal 5'-phosphate serves as cofactor.

It carries out the reaction [(1-&gt;4)-alpha-D-glucosyl](n) + phosphate = [(1-&gt;4)-alpha-D-glucosyl](n-1) + alpha-D-glucose 1-phosphate. Its function is as follows. Phosphorylase is an important allosteric enzyme in carbohydrate metabolism. Enzymes from different sources differ in their regulatory mechanisms and in their natural substrates. However, all known phosphorylases share catalytic and structural properties. This Synechocystis sp. (strain ATCC 27184 / PCC 6803 / Kazusa) protein is Glycogen phosphorylase (glgP).